A 424-amino-acid polypeptide reads, in one-letter code: Probable ribonuclease FAU-1 (424 aa).

Belongs to the FAU-1 family.

In terms of biological role, probable RNase involved in rRNA stability through maturation and/or degradation of precursor rRNAs. Binds to RNA in loop regions with AU-rich sequences. This is Probable ribonuclease FAU-1 from Saccharolobus islandicus (strain Y.G.57.14 / Yellowstone #1) (Sulfolobus islandicus).